Consider the following 251-residue polypeptide: Hydroxyacylglutathione hydrolase (251 aa).

7 residues coordinate Zn(2+): His53, His55, Asp57, His58, His110, Asp127, and His165.

It belongs to the metallo-beta-lactamase superfamily. Glyoxalase II family. As to quaternary structure, monomer. Zn(2+) is required as a cofactor.

It catalyses the reaction an S-(2-hydroxyacyl)glutathione + H2O = a 2-hydroxy carboxylate + glutathione + H(+). Its pathway is secondary metabolite metabolism; methylglyoxal degradation; (R)-lactate from methylglyoxal: step 2/2. Its function is as follows. Thiolesterase that catalyzes the hydrolysis of S-D-lactoyl-glutathione to form glutathione and D-lactic acid. This is Hydroxyacylglutathione hydrolase from Serratia proteamaculans (strain 568).